A 512-amino-acid chain; its full sequence is Krueppel-like factor 11 (512 aa).

The interval 109 to 128 (PQSPDLVEPSTRTPVSPQVT) is disordered. Residues 118 to 128 (STRTPVSPQVT) are compositionally biased toward polar residues. At Ser-124 the chain carries Phosphoserine. C2H2-type zinc fingers lie at residues 394-418 (YVCS…LRTH), 424-448 (FNCS…RRTH), and 454-476 (FVCP…ARRH).

It belongs to the Sp1 C2H2-type zinc-finger protein family. Interacts with SIN3A. In terms of tissue distribution, ubiquitous. Higher expression in erythroid cells.

It is found in the nucleus. In terms of biological role, transcription factor. Activates the epsilon- and gamma-globin gene promoters and, to a much lower degree, the beta-globin gene and represses promoters containing SP1-like binding inhibiting cell growth. Represses transcription of SMAD7 which enhances TGF-beta signaling. Induces apoptosis. In Homo sapiens (Human), this protein is Krueppel-like factor 11 (KLF11).